The sequence spans 373 residues: Cell division protein FtsZ 1 (373 aa).

GTP contacts are provided by residues 51 to 55 (GAGCN), 138 to 140 (GTG), Glu-169, Arg-173, and Asp-216. A disordered region spans residues 354 to 373 (EESYFGEEERRPIKLDLDEL). Over residues 360–373 (EEERRPIKLDLDEL) the composition is skewed to basic and acidic residues.

The protein belongs to the FtsZ family. As to quaternary structure, homodimer. Polymerizes to form a dynamic ring structure in a strictly GTP-dependent manner. Interacts directly with several other division proteins.

The protein localises to the cytoplasm. Its function is as follows. Essential cell division protein that forms a contractile ring structure (Z ring) at the future cell division site. The regulation of the ring assembly controls the timing and the location of cell division. One of the functions of the FtsZ ring is to recruit other cell division proteins to the septum to produce a new cell wall between the dividing cells. Binds GTP and shows GTPase activity. This is Cell division protein FtsZ 1 from Thermococcus kodakarensis (strain ATCC BAA-918 / JCM 12380 / KOD1) (Pyrococcus kodakaraensis (strain KOD1)).